Reading from the N-terminus, the 441-residue chain is Nuclear distribution protein nudF (441 aa).

A LisH domain is found at 9–41 (QAEELHKSIIAYLASVNLTESSAALRAELGDSV). WD repeat units follow at residues 87–128 (GHRE…RTVK), 130–170 (HTKA…KNIR), 174–221 (GHDH…CVKT), 224–263 (GHVDWVRAVAPSLDGRFLFAAGDDRIPRLWDLSSAETKST), 266–326 (GHEH…IKTL), 328–367 (GHDNWVRALAFHPGGKHLLSVADDKTIRCWDLTQECKCVR), 372–402 (AHGHFVTCLRWAPPLIKDGGANGESETNGAP), and 403–440 (AATATTNGVRPDPNAANKISIRCVIATGSVDRKVRIFA). Positions 390–415 (GGANGESETNGAPAATATTNGVRPDP) are disordered. Residues 398–410 (TNGAPAATATTNG) show a composition bias toward low complexity.

It belongs to the WD repeat LIS1/nudF family. In terms of assembly, self-associates. Interacts with nudE and dynein.

The protein resides in the cytoplasm. The protein localises to the cytoskeleton. Its subcellular location is the spindle pole. Its function is as follows. Positively regulates the activity of the minus-end directed microtubule motor protein dynein. May enhance dynein-mediated microtubule sliding by targeting dynein to the microtubule plus end. Required for nuclear migration during vegetative growth as well as development. Required for retrograde early endosome (EE) transport from the hyphal tip. Required for localization of dynein to the mitotic spindle poles. Recruits additional proteins to the dynein complex at SPBs. This chain is Nuclear distribution protein nudF, found in Neosartorya fischeri (strain ATCC 1020 / DSM 3700 / CBS 544.65 / FGSC A1164 / JCM 1740 / NRRL 181 / WB 181) (Aspergillus fischerianus).